Reading from the N-terminus, the 258-residue chain is MASAAAATTEKGSPVVVGLLVMGNIIILLSGLALFAETVWVTADQYRIYPLMGVSGKDDVFAGAWIAIFCGFSFFVVASFGVGAALCRRRSMILTYLILMLIIYIFECASCITSYTHRDYMVSNPSLITKQMLTFYSADSNQGRELTRLWDRIMIEQECCGTSGPMDWVNFTSAFRATTPEVVFPWPPLCCRRTGNFIPVNEEGCRLGHLDYLFTKGCFEHIGHAIDSYTWGISWFGFAILMWTLPVMLIAMYFYTTL.

The Cytoplasmic portion of the chain corresponds to 1-14 (MASAAAATTEKGSP). A helical membrane pass occupies residues 15-35 (VVVGLLVMGNIIILLSGLALF). Residues 36–59 (AETVWVTADQYRIYPLMGVSGKDD) lie on the Extracellular side of the membrane. A helical transmembrane segment spans residues 60–86 (VFAGAWIAIFCGFSFFVVASFGVGAAL). Topologically, residues 87 to 91 (CRRRS) are cytoplasmic. Residues 92–112 (MILTYLILMLIIYIFECASCI) form a helical membrane-spanning segment. The Extracellular segment spans residues 113–230 (TSYTHRDYMV…HIGHAIDSYT (118 aa)). N-linked (GlcNAc...) asparagine glycosylation occurs at Asn-170. Residues 231–252 (WGISWFGFAILMWTLPVMLIAM) traverse the membrane as a helical segment. The Cytoplasmic segment spans residues 253–258 (YFYTTL).

The protein belongs to the tetraspanin (TM4SF) family. Homodimer; disulfide-linked. Interacts with uroplakin-2 (UPK2). In terms of processing, the N-terminus is blocked. N-glycosylated with high-mannose oligosaccharides. As to expression, bladder epithelium.

It is found in the membrane. Functionally, component of the asymmetric unit membrane (AUM); a highly specialized biomembrane elaborated by terminally differentiated urothelial cells. May play an important role in normal bladder epithelial physiology, possibly in regulating membrane permeability of superficial umbrella cells or in stabilizing the apical membrane through AUM/cytoskeletal interactions. The sequence is that of Uroplakin-1a (UPK1A) from Bos taurus (Bovine).